The sequence spans 270 residues: tRNA pseudouridine synthase A (270 aa).

Asp-60 functions as the Nucleophile in the catalytic mechanism. The RNA binding stretch occupies residues 107 to 111 (FHARF). Tyr-118 lines the substrate pocket. The segment at 168-172 (QCQSR) is interaction with tRNA.

It belongs to the tRNA pseudouridine synthase TruA family. Homodimer.

The catalysed reaction is uridine(38/39/40) in tRNA = pseudouridine(38/39/40) in tRNA. Formation of pseudouridine at positions 38, 39 and 40 in the anticodon stem and loop of transfer RNAs. This Shigella sonnei (strain Ss046) protein is tRNA pseudouridine synthase A.